A 537-amino-acid chain; its full sequence is Extracellular exo-inulinase inuE (537 aa).

The first 19 residues, 1–19 (MARLLKAVTVCALAGIAHA), serve as a signal peptide directing secretion. D41 is a catalytic residue. Residues N49, N67, N112, N300, N363, N398, N430, and N531 are each glycosylated (N-linked (GlcNAc...) asparagine).

It belongs to the glycosyl hydrolase 32 family.

The protein localises to the secreted. It catalyses the reaction Hydrolysis of terminal, non-reducing (2-&gt;1)- and (2-&gt;6)-linked beta-D-fructofuranose residues in fructans.. With respect to regulation, the catalytic activity is increased by manganese cathions, but strongly inhibited by other metal ions such as copper, aluminum, silver, iron, nickel, zinc and magnesium cathions. Exo-inulinase involved in utilization of the plant storage polymer inulin, consisting of fructooligosaccharides with a degree of polymerization (DP) value from 2 to 60. Splits off terminal fructose units successively from the non-reducing end of the inulin molecule, and also hydrolyze sucrose and raffinose. The sequence is that of Extracellular exo-inulinase inuE (exoI) from Aspergillus ficuum.